A 375-amino-acid polypeptide reads, in one-letter code: uncharacterized protein (375 aa).

The next 7 membrane-spanning stretches (helical) occupy residues 21 to 41 (LLLL…IVLF), 66 to 86 (IIVF…FCVS), 160 to 180 (LVGV…PGIV), 203 to 223 (LVGL…HLLI), 234 to 254 (FYMV…FHLF), 289 to 309 (VISF…YFLI), and 338 to 358 (FFLM…MLFF).

It localises to the cell membrane. This is an uncharacterized protein from Mycoplasma genitalium (strain ATCC 33530 / DSM 19775 / NCTC 10195 / G37) (Mycoplasmoides genitalium).